A 277-amino-acid polypeptide reads, in one-letter code: 4-hydroxy-3-prenylphenylpyruvate oxygenase/4-hydroxy-3-prenylbenzoate synthase (277 aa).

The protein belongs to the aldolase class II family. In terms of assembly, homotetramer. Requires Fe(2+) as cofactor.

The catalysed reaction is 3-dimethylallyl-4-hydroxyphenylpyruvate + O2 = 3-dimethylallyl-4-hydroxymandelate + CO2. It carries out the reaction 3-dimethylallyl-4-hydroxymandelate + O2 = 3-dimethylallyl-4-hydroxybenzoate + CO2 + H2O. Its pathway is antibiotic biosynthesis. Its activity is regulated as follows. Activated by ascorbate. Functionally, involved in the biosynthesis of ring A of the aminocoumarin antibiotic clorobiocin. Catalyzes two consecutive oxidative decarboxylations of 3-dimethylallyl-4-hydroxyphenylpyruvate (3DMA-4HPP) to yield 3-dimethylallyl-4-hydroxybenzoate (3DMA-4HB) via the 3-dimethylallyl-4-hydroxymandelic acid (3DMA-4HMA) intermediate. In Streptomyces roseochromogenus subsp. oscitans, this protein is 4-hydroxy-3-prenylphenylpyruvate oxygenase/4-hydroxy-3-prenylbenzoate synthase.